The following is a 331-amino-acid chain: Phospho-N-acetylmuramoyl-pentapeptide-transferase (331 aa).

The next 9 helical transmembrane spans lie at Ile7 to Pro27, Thr54 to Ile74, Leu78 to Ile98, Leu106 to Ile126, Ile133 to Thr153, Ile154 to Ala174, Ile195 to Phe215, Ala249 to Ile269, and Val311 to Ser331.

Belongs to the glycosyltransferase 4 family. MraY subfamily. Mg(2+) serves as cofactor.

The protein resides in the cell membrane. The catalysed reaction is UDP-N-acetyl-alpha-D-muramoyl-L-alanyl-gamma-D-glutamyl-meso-2,6-diaminopimeloyl-D-alanyl-D-alanine + di-trans,octa-cis-undecaprenyl phosphate = di-trans,octa-cis-undecaprenyl diphospho-N-acetyl-alpha-D-muramoyl-L-alanyl-D-glutamyl-meso-2,6-diaminopimeloyl-D-alanyl-D-alanine + UMP. It participates in cell wall biogenesis; peptidoglycan biosynthesis. Functionally, catalyzes the initial step of the lipid cycle reactions in the biosynthesis of the cell wall peptidoglycan: transfers peptidoglycan precursor phospho-MurNAc-pentapeptide from UDP-MurNAc-pentapeptide onto the lipid carrier undecaprenyl phosphate, yielding undecaprenyl-pyrophosphoryl-MurNAc-pentapeptide, known as lipid I. This Alkaliphilus metalliredigens (strain QYMF) protein is Phospho-N-acetylmuramoyl-pentapeptide-transferase.